We begin with the raw amino-acid sequence, 103 residues long: Putative membrane protein insertion efficiency factor (103 aa).

Positions 68–103 (HEGGYDPVPLAKQDAKPENNSESESLLNQPTETKSL) are disordered. The segment covering 87-103 (NSESESLLNQPTETKSL) has biased composition (polar residues).

This sequence belongs to the UPF0161 family.

It localises to the cell inner membrane. Its function is as follows. Could be involved in insertion of integral membrane proteins into the membrane. The sequence is that of Putative membrane protein insertion efficiency factor from Idiomarina loihiensis (strain ATCC BAA-735 / DSM 15497 / L2-TR).